The sequence spans 422 residues: Imidazolonepropionase (422 aa).

Positions 82 and 84 each coordinate Fe(3+). 2 residues coordinate Zn(2+): H82 and H84. The 4-imidazolone-5-propanoate site is built by R91, Y154, and H187. Y154 is a binding site for N-formimidoyl-L-glutamate. H252 contacts Fe(3+). Residue H252 participates in Zn(2+) binding. E255 is a 4-imidazolone-5-propanoate binding site. D327 lines the Fe(3+) pocket. Residue D327 participates in Zn(2+) binding. Residues N329 and G331 each coordinate N-formimidoyl-L-glutamate. 4-imidazolone-5-propanoate is bound at residue S332.

This sequence belongs to the metallo-dependent hydrolases superfamily. HutI family. Requires Zn(2+) as cofactor. Fe(3+) is required as a cofactor.

The protein resides in the cytoplasm. The enzyme catalyses 4-imidazolone-5-propanoate + H2O = N-formimidoyl-L-glutamate. Its pathway is amino-acid degradation; L-histidine degradation into L-glutamate; N-formimidoyl-L-glutamate from L-histidine: step 3/3. In terms of biological role, catalyzes the hydrolytic cleavage of the carbon-nitrogen bond in imidazolone-5-propanoate to yield N-formimidoyl-L-glutamate. It is the third step in the universal histidine degradation pathway. The protein is Imidazolonepropionase of Alkaliphilus metalliredigens (strain QYMF).